The chain runs to 293 residues: PHD finger protein 11A (293 aa).

The C2HC pre-PHD-type zinc-finger motif lies at 25 to 61 (KRTCALCPEGHEWSQIYFSPSANIVAHENCLLYSSGL). The PHD-type; degenerate zinc finger occupies 91-143 (LKCSFCKNKGATMGYDLQSCTKNYHLSCAMEDHAILQVDEDHGTYKLFCQKHA). Residues 262–293 (SSSTSGSLLPPEDHQVRCQESPEVQAGSGDSL) are disordered.

It localises to the nucleus. This is PHD finger protein 11A (Phf11a) from Mus musculus (Mouse).